A 364-amino-acid polypeptide reads, in one-letter code: Growth hormone secretagogue receptor type 1 (364 aa).

The Extracellular segment spans residues 1 to 40 (MWNATPSEEPEPNVTLDLDWDASPGNDSLSDELLPLFPAP). N13 and N26 each carry an N-linked (GlcNAc...) asparagine glycan. The helical transmembrane segment at 41–66 (LLAGVTATCVALFVVGISGNLLTMLV) threads the bilayer. At 67 to 72 (VSRFRE) the chain is on the cytoplasmic side. Residues 73–96 (LRTTTNLYLSSMAFSDLLIFLCMP) form a helical membrane-spanning segment. Residues 97–117 (LDLVRLWQYRPWNFGDLLCKL) lie on the Extracellular side of the membrane. C115 and C197 are joined by a disulfide. A helical transmembrane segment spans residues 118 to 139 (FQFVSESCTYATVLTITALSVE). At 140–162 (RYFAICFPLRAKVVVTKGRVKLV) the chain is on the cytoplasmic side. A helical membrane pass occupies residues 163 to 183 (ILVIWAVAFCSAGPIFVLVGV). Residues 184–211 (EHENGTDPRDTNECRATEFAVRSGLLTV) lie on the Extracellular side of the membrane. N187 carries an N-linked (GlcNAc...) asparagine glycan. A helical membrane pass occupies residues 212–235 (MVWVSSVFFFLPVFCLTVLYSLIG). The Cytoplasmic portion of the chain corresponds to 236–263 (RKLWRRRGDAAVGSSLRDQNHKQTVKML). The helical transmembrane segment at 264–285 (AVVVFAFILCWLPFHVGRYLFS) threads the bilayer. At 286-302 (KSFEPGSLEIAQISQYC) the chain is on the extracellular side. A helical transmembrane segment spans residues 303-326 (NLVSFVLFYLSAAINPILYNIMSK). Topologically, residues 327–364 (KYRVAVFKLLGFESFSQRKLSTLKDESSRAWTKSSINT) are cytoplasmic.

Belongs to the G-protein coupled receptor 1 family.

It localises to the cell membrane. In terms of biological role, receptor for ghrelin, coupled to G-alpha-11 proteins. Stimulates growth hormone secretion. Also binds other growth hormone releasing peptides (GHRP) (e.g. Met-enkephalin and GHRP-6) as well as non-peptide, low molecular weight secretagogues (e.g. L-692,429, MK-0677, adenosine). In Mus musculus (Mouse), this protein is Growth hormone secretagogue receptor type 1 (Ghsr).